We begin with the raw amino-acid sequence, 263 residues long: Polyglutamine-binding protein 1 (263 aa).

In terms of domain architecture, WW spans 46 to 80 (EGLPPSWYKVFDPSCGLPYYWNVETDLVSWLSPHD). A disordered region spans residues 94 to 263 (NNNADAEDKS…AEASRTKQQD (170 aa)). Basic and acidic residues predominate over residues 99 to 173 (AEDKSDRNLE…DKADREEGKD (75 aa)). One copy of the 1-1; approximate repeat lies at 104-110 (DRNLEKV). Residues 104–138 (DRNLEKVDRNHEKSDRSHEKPDRSHEKADRNHEKN) are 5 X 7 AA approximate tandem repeats of D-R-[NS]-H-E-K-S. A 1-2 repeat occupies 111 to 117 (DRNHEKS). The stretch at 118–124 (DRSHEKP) is one 1-3; approximate repeat. Residues 125-131 (DRSHEKA) form a 1-4; approximate repeat. Residues 132–138 (DRNHEKN) form a 1-5; approximate repeat. Tandem repeats lie at residues 139–140 (DR), 141–142 (ER), 143–144 (ER), 150–151 (DR), 152–153 (ER), 154–155 (DR), 156–157 (DR), 158–159 (ER), and 160–161 (ER). Residues 139-144 (DRERER) form a 3 X 2 AA tandem repeats of [DE]-R region. Residues 150 to 161 (DRERDRDRERER) are 6 X 2 AA tandem repeats of [DE]-R. Residues 243–253 (YPSPGAVLRAN) are important for interaction with TXNL4A. At Ser245 the chain carries Phosphoserine.

Interacts with POU3F2/Brn-2, ATXN1, TXNL4A, HTT and AR. Interaction with ATXN1 correlates positively with the length of the polyglutamine tract. Interacts with RNA polymerase II large subunit in a phosphorylation-dependent manner. Forms a ternary complex with ATXN1 mutant and phosphorylated RNA polymerase II. Interacts (via C-terminus) with TXNL4A and CD2BP2. Interacts (via WW domain) with ATN1 and SF3B1, and may interact with additional splice factors. Interacts (via WW domain) with WBP11; Leading to reduce interaction between PQBP1 and TXNL4A. Interacts with CAPRIN1. Interacts with DDX1. Interacts with SFPQ. Interacts with KHSRP. Detected in brain cortex and hippocampus neurons (at protein level). Expressed in brain with high level in cerebellar cortex, hippocampus and olfactory bulb.

It localises to the nucleus. Its subcellular location is the nucleus speckle. It is found in the cytoplasmic granule. Functionally, intrinsically disordered protein that acts as a scaffold, and which is involved in different processes, such as pre-mRNA splicing, transcription regulation, innate immunity and neuron development. Interacts with splicing-related factors via the intrinsically disordered region and regulates alternative splicing of target pre-mRNA species. May suppress the ability of POU3F2 to transactivate the DRD1 gene in a POU3F2 dependent manner. Can activate transcription directly or via association with the transcription machinery. May be involved in ATXN1 mutant-induced cell death. The interaction with ATXN1 mutant reduces levels of phosphorylated RNA polymerase II large subunit. Involved in the assembly of cytoplasmic stress granule, possibly by participating in the transport of neuronal RNA granules. Also acts as an innate immune sensor of infection by retroviruses, by detecting the presence of reverse-transcribed DNA in the cytosol. Directly binds retroviral reverse-transcribed DNA in the cytosol and interacts with CGAS, leading to activate the cGAS-STING signaling pathway, triggering type-I interferon production. In Mus musculus (Mouse), this protein is Polyglutamine-binding protein 1 (Pqbp1).